The primary structure comprises 353 residues: Photosystem II D2 protein (353 aa).

Position 2 is an N-acetylthreonine (T2). T2 is modified (phosphothreonine). Residues 41–61 (CAYFALGGWFTGTTFVTSWYT) traverse the membrane as a helical segment. H118 contributes to the chlorophyll a binding site. The chain crosses the membrane as a helical span at residues 125 to 141 (GFMLRQFELARSVQLRP). Pheophytin a is bound by residues Q130 and N143. A helical membrane pass occupies residues 153-166 (VFVSVFLIYPLGQS). Residue H198 coordinates chlorophyll a. Residues 208–228 (AALLCAIHGATVENTLFEDGD) traverse the membrane as a helical segment. 2 residues coordinate a plastoquinone: H215 and F262. H215 provides a ligand contact to Fe cation. H269 serves as a coordination point for Fe cation. A helical transmembrane segment spans residues 279–295 (GLWMSALGVVGLALNLR).

This sequence belongs to the reaction center PufL/M/PsbA/D family. PSII is composed of 1 copy each of membrane proteins PsbA, PsbB, PsbC, PsbD, PsbE, PsbF, PsbH, PsbI, PsbJ, PsbK, PsbL, PsbM, PsbT, PsbX, PsbY, PsbZ, Psb30/Ycf12, at least 3 peripheral proteins of the oxygen-evolving complex and a large number of cofactors. It forms dimeric complexes. The cofactor is The D1/D2 heterodimer binds P680, chlorophylls that are the primary electron donor of PSII, and subsequent electron acceptors. It shares a non-heme iron and each subunit binds pheophytin, quinone, additional chlorophylls, carotenoids and lipids. There is also a Cl(-1) ion associated with D1 and D2, which is required for oxygen evolution. The PSII complex binds additional chlorophylls, carotenoids and specific lipids..

The protein resides in the plastid. The protein localises to the chloroplast thylakoid membrane. The catalysed reaction is 2 a plastoquinone + 4 hnu + 2 H2O = 2 a plastoquinol + O2. Functionally, photosystem II (PSII) is a light-driven water:plastoquinone oxidoreductase that uses light energy to abstract electrons from H(2)O, generating O(2) and a proton gradient subsequently used for ATP formation. It consists of a core antenna complex that captures photons, and an electron transfer chain that converts photonic excitation into a charge separation. The D1/D2 (PsbA/PsbD) reaction center heterodimer binds P680, the primary electron donor of PSII as well as several subsequent electron acceptors. D2 is needed for assembly of a stable PSII complex. In Barbarea verna (Land cress), this protein is Photosystem II D2 protein.